The sequence spans 57 residues: Large ribosomal subunit protein bL32 (57 aa).

The disordered stretch occupies residues 1–23; sequence MAVPKKKTSKSKRDKRRATWRHK.

Belongs to the bacterial ribosomal protein bL32 family.

The polypeptide is Large ribosomal subunit protein bL32 (Trichormus variabilis (strain ATCC 29413 / PCC 7937) (Anabaena variabilis)).